Consider the following 249-residue polypeptide: Expansin-A18 (249 aa).

Positions 1-21 are cleaved as a signal peptide; the sequence is MGNIVLQLLAILALCIAPARS. Residues 41–154 form the Expansin-like EG45 domain; that stretch reads GGACGYGNLY…QQVKCWRSGG (114 aa). Asn116 is a glycosylation site (N-linked (GlcNAc...) asparagine). The Expansin-like CBD domain occupies 164-243; the sequence is YFELVLVTNM…GWSFGQTFST (80 aa).

Belongs to the expansin family. Expansin A subfamily. As to expression, expressed in roots.

The protein resides in the secreted. Its subcellular location is the cell wall. The protein localises to the membrane. Its function is as follows. May cause loosening and extension of plant cell walls by disrupting non-covalent bonding between cellulose microfibrils and matrix glucans. No enzymatic activity has been found. May be required for rapid internodal elongation in deepwater rice during submergence. This is Expansin-A18 (EXPA18) from Oryza sativa subsp. japonica (Rice).